Consider the following 274-residue polypeptide: Diaminopimelate epimerase (274 aa).

3 residues coordinate substrate: asparagine 11, glutamine 44, and asparagine 64. Cysteine 73 serves as the catalytic Proton donor. Substrate is bound by residues 74 to 75 (GN), asparagine 157, asparagine 190, and 208 to 209 (ER). Cysteine 217 serves as the catalytic Proton acceptor. 218–219 (GS) contributes to the substrate binding site.

This sequence belongs to the diaminopimelate epimerase family. As to quaternary structure, homodimer.

The protein resides in the cytoplasm. The enzyme catalyses (2S,6S)-2,6-diaminopimelate = meso-2,6-diaminopimelate. It participates in amino-acid biosynthesis; L-lysine biosynthesis via DAP pathway; DL-2,6-diaminopimelate from LL-2,6-diaminopimelate: step 1/1. Its function is as follows. Catalyzes the stereoinversion of LL-2,6-diaminopimelate (L,L-DAP) to meso-diaminopimelate (meso-DAP), a precursor of L-lysine and an essential component of the bacterial peptidoglycan. This chain is Diaminopimelate epimerase, found in Haemophilus influenzae (strain PittEE).